A 971-amino-acid chain; its full sequence is Oncostatin-M-specific receptor subunit beta (971 aa).

A signal peptide spans 1 to 23 (MAFSVVLHPAFLLAVLSLRASRS). Over 24-737 (EVLEEPLPLT…VTTPDARSHM (714 aa)) the chain is Extracellular. Residues N74, N97, N130, N162, and N239 are each glycosylated (N-linked (GlcNAc...) asparagine). C242 and C252 form a disulfide bridge. Residues N271, N304, N323, and N377 are each glycosylated (N-linked (GlcNAc...) asparagine). Fibronectin type-III domains follow at residues 332-425 (APQD…TPET), 427-523 (PSQA…SNDS), 524-620 (GHEE…TQEL), and 622-733 (PLVN…TPDA). A WSXWS motif motif is present at residues 412-416 (WSDWT). N-linked (GlcNAc...) asparagine glycans are attached at residues N491, N541, N577, N689, and N722. The chain crosses the membrane as a helical span at residues 738 to 758 (LLQIILPMTLCVLLSIIVCYW). Residues 759–971 (KSQWVKEKCY…STVLLGQGEQ (213 aa)) lie on the Cytoplasmic side of the membrane. Residues 767-775 (CYPDIPNPY) carry the Box 1 motif motif. Positions 949–971 (LASPSLKEDNSLTSTVLLGQGEQ) are disordered. Over residues 959 to 971 (SLTSTVLLGQGEQ) the composition is skewed to polar residues.

It belongs to the type I cytokine receptor family. Type 2 subfamily. As to quaternary structure, heterodimer composed of OSMR and IL6ST (type II OSM receptor). Heterodimer with IL31RA to form the IL31 receptor. Widely expressed. Expressed at highest levels in the lung, heart, thymus and spleen. Expressed in dorsal root ganglia.

The protein localises to the membrane. Associates with IL31RA to form the IL31 receptor. Binds IL31 to activate STAT3 and possibly STAT1 and STAT5. Capable of transducing OSM-specific signaling events. The protein is Oncostatin-M-specific receptor subunit beta (Osmr) of Mus musculus (Mouse).